The following is a 395-amino-acid chain: S-adenosylmethionine synthase (395 aa).

An ATP-binding site is contributed by H16. Mg(2+) is bound at residue D18. A K(+)-binding site is contributed by E44. L-methionine is bound by residues E57 and Q100. The flexible loop stretch occupies residues 100 to 110 (QSPDIAQGVDD). ATP is bound by residues 174–176 (DAK), 241–242 (RF), D250, 256–257 (RK), A273, and K277. D250 is a binding site for L-methionine. K281 serves as a coordination point for L-methionine.

It belongs to the AdoMet synthase family. Homotetramer; dimer of dimers. Mg(2+) serves as cofactor. The cofactor is K(+).

The protein localises to the cytoplasm. It catalyses the reaction L-methionine + ATP + H2O = S-adenosyl-L-methionine + phosphate + diphosphate. The protein operates within amino-acid biosynthesis; S-adenosyl-L-methionine biosynthesis; S-adenosyl-L-methionine from L-methionine: step 1/1. Functionally, catalyzes the formation of S-adenosylmethionine (AdoMet) from methionine and ATP. The overall synthetic reaction is composed of two sequential steps, AdoMet formation and the subsequent tripolyphosphate hydrolysis which occurs prior to release of AdoMet from the enzyme. The polypeptide is S-adenosylmethionine synthase (Lactiplantibacillus plantarum (strain ATCC BAA-793 / NCIMB 8826 / WCFS1) (Lactobacillus plantarum)).